The sequence spans 385 residues: m7GpppN-mRNA hydrolase (385 aa).

The Nudix hydrolase domain occupies 95–226 (MGVPTYGAII…KLGLAPNKFF (132 aa)). The Nudix box signature appears at 129–150 (GKVNKEEAPHDCAAREVFEETG). Mn(2+) contacts are provided by Glu144 and Glu148. Residues Ser246, Ser247, Ser249, Ser276, and Ser284 each carry the phosphoserine modification. A disordered region spans residues 247–266 (SDSDNGFSSTGSTPAKPTVE). The segment covering 249-259 (SDNGFSSTGST) has biased composition (low complexity).

This sequence belongs to the Nudix hydrolase family. DCP2 subfamily. Found in a mRNA decay complex with LSM1, LSM3, LSM4, EXOSC2, EXOSC4, EXOSC10, PARN, XRN1, CNOT6, UPF1, UPF2 and UPF3B. Forms a complex with DCP1A, EDC3, DDX6 and EDC4/HEDLS, within this complex directly interacts with EDC4/HEDLS. Interacts with DPC1B, UPF1, UPF2 and UPF3B. Associates with polysomes. Interacts (via N-terminus and C-terminus) with TRIM21 (via N-terminus and C-terminus). Interacts with LIMD1, WTIP and AJUBA. Interacts with DDX17 in an RNA-dependent manner. Interacts with ZC3HAV1. Interacts with APOBEC3G in an RNA-dependent manner. Interacts with ZFP36L1 (via N-terminus). Interacts with NBDY. The cofactor is Mn(2+). Mg(2+) is required as a cofactor.

It localises to the cytoplasm. The protein resides in the P-body. It is found in the nucleus. The catalysed reaction is a 5'-end (N(7)-methyl 5'-triphosphoguanosine)-ribonucleoside in mRNA + H2O = N(7)-methyl-GDP + a 5'-end phospho-ribonucleoside in mRNA + 2 H(+). Functionally, decapping metalloenzyme that catalyzes the cleavage of the cap structure on mRNAs. Removes the 7-methyl guanine cap structure from mRNA molecules, yielding a 5'-phosphorylated mRNA fragment and 7m-GDP. Necessary for the degradation of mRNAs, both in normal mRNA turnover and in nonsense-mediated mRNA decay. Plays a role in replication-dependent histone mRNA degradation. Has higher activity towards mRNAs that lack a poly(A) tail. Has no activity towards a cap structure lacking an RNA moiety. The presence of a N(6)-methyladenosine methylation at the second transcribed position of mRNAs (N(6),2'-O-dimethyladenosine cap; m6A(m)) provides resistance to DCP2-mediated decapping. Blocks autophagy in nutrient-rich conditions by repressing the expression of ATG-related genes through degradation of their transcripts. The sequence is that of m7GpppN-mRNA hydrolase (DCP2) from Pongo abelii (Sumatran orangutan).